The sequence spans 288 residues: Homoserine kinase (288 aa).

79-89 (PPARGLGSSSA) contacts ATP.

It belongs to the GHMP kinase family. Homoserine kinase subfamily.

It localises to the cytoplasm. It catalyses the reaction L-homoserine + ATP = O-phospho-L-homoserine + ADP + H(+). It functions in the pathway amino-acid biosynthesis; L-threonine biosynthesis; L-threonine from L-aspartate: step 4/5. Catalyzes the ATP-dependent phosphorylation of L-homoserine to L-homoserine phosphate. This is Homoserine kinase from Listeria welshimeri serovar 6b (strain ATCC 35897 / DSM 20650 / CCUG 15529 / CIP 8149 / NCTC 11857 / SLCC 5334 / V8).